The primary structure comprises 191 residues: Protein GrpE (191 aa).

It belongs to the GrpE family. As to quaternary structure, homodimer.

It is found in the cytoplasm. Functionally, participates actively in the response to hyperosmotic and heat shock by preventing the aggregation of stress-denatured proteins, in association with DnaK and GrpE. It is the nucleotide exchange factor for DnaK and may function as a thermosensor. Unfolded proteins bind initially to DnaJ; upon interaction with the DnaJ-bound protein, DnaK hydrolyzes its bound ATP, resulting in the formation of a stable complex. GrpE releases ADP from DnaK; ATP binding to DnaK triggers the release of the substrate protein, thus completing the reaction cycle. Several rounds of ATP-dependent interactions between DnaJ, DnaK and GrpE are required for fully efficient folding. The polypeptide is Protein GrpE (Nitratidesulfovibrio vulgaris (strain ATCC 29579 / DSM 644 / CCUG 34227 / NCIMB 8303 / VKM B-1760 / Hildenborough) (Desulfovibrio vulgaris)).